We begin with the raw amino-acid sequence, 104 residues long: uncharacterized protein (104 aa).

Residues 77 to 98 form a helical membrane-spanning segment; sequence IAAVRANIIICACFFYLFCYCS.

It localises to the membrane. This is an uncharacterized protein from Saccharomyces cerevisiae (strain ATCC 204508 / S288c) (Baker's yeast).